A 258-amino-acid polypeptide reads, in one-letter code: Small ribosomal subunit protein eS1 (258 aa).

Positions 235–258 are disordered; the sequence is VASSGDAGSAVRRDGYEPPVQESV.

This sequence belongs to the eukaryotic ribosomal protein eS1 family. As to quaternary structure, component of the small ribosomal subunit. Mature ribosomes consist of a small (40S) and a large (60S) subunit. The 40S subunit contains about 33 different proteins and 1 molecule of RNA (18S). The 60S subunit contains about 49 different proteins and 3 molecules of RNA (28S, 5.8S and 5S).

The protein resides in the cytoplasm. This Trichoplax adhaerens (Trichoplax reptans) protein is Small ribosomal subunit protein eS1.